The following is a 423-amino-acid chain: tRNA(Ile2) 2-agmatinylcytidine synthetase TiaS (423 aa).

Residues 273–347 (VIVYGRVVEE…GINIEKIKIL (75 aa)) constitute a DNA-binding region (OB).

Belongs to the TiaS family.

Its subcellular location is the cytoplasm. The enzyme catalyses cytidine(34) in tRNA(Ile2) + agmatine + ATP + H2O = 2-agmatinylcytidine(34) in tRNA(Ile2) + AMP + 2 phosphate + 2 H(+). Its function is as follows. ATP-dependent agmatine transferase that catalyzes the formation of 2-agmatinylcytidine (agm2C) at the wobble position (C34) of tRNA(Ile2), converting the codon specificity from AUG to AUA. This is tRNA(Ile2) 2-agmatinylcytidine synthetase TiaS from Methanocaldococcus jannaschii (strain ATCC 43067 / DSM 2661 / JAL-1 / JCM 10045 / NBRC 100440) (Methanococcus jannaschii).